The following is an 878-amino-acid chain: Alanine--tRNA ligase (878 aa).

Residues His567, His571, Cys669, and His673 each contribute to the Zn(2+) site.

The protein belongs to the class-II aminoacyl-tRNA synthetase family. Zn(2+) is required as a cofactor.

It is found in the cytoplasm. The enzyme catalyses tRNA(Ala) + L-alanine + ATP = L-alanyl-tRNA(Ala) + AMP + diphosphate. Its function is as follows. Catalyzes the attachment of alanine to tRNA(Ala) in a two-step reaction: alanine is first activated by ATP to form Ala-AMP and then transferred to the acceptor end of tRNA(Ala). Also edits incorrectly charged Ser-tRNA(Ala) and Gly-tRNA(Ala) via its editing domain. The sequence is that of Alanine--tRNA ligase from Rickettsia akari (strain Hartford).